Consider the following 714-residue polypeptide: Developmentally-regulated protein kinase 1 (714 aa).

Disordered stretches follow at residues 88–122 (NNNISNNNNNNNNNNNNNNNNNNNNNNINNNNNFN) and 174–266 (CNMI…IINN). 3 stretches are compositionally biased toward low complexity: residues 174–200 (CNMINNDNNNNNNNNNNNNNNNNNNNN), 209–227 (PSSNSTPSHSSPSSPTTSS), and 240–266 (NFNQQLQNNNNSNNNSNNNNNNNIINN). One can recognise a Protein kinase domain in the interval 334-589 (FNFYGSLGSG…SCSIRNHKWF (256 aa)). ATP-binding positions include 340 to 348 (LGSGSFGTA) and K363. D457 serves as the catalytic Proton acceptor. The residue at position 488 (T488) is a Phosphothreonine.

This sequence belongs to the protein kinase superfamily. AGC Ser/Thr protein kinase family.

The enzyme catalyses L-seryl-[protein] + ATP = O-phospho-L-seryl-[protein] + ADP + H(+). It carries out the reaction L-threonyl-[protein] + ATP = O-phospho-L-threonyl-[protein] + ADP + H(+). The chain is Developmentally-regulated protein kinase 1 (pkaD) from Dictyostelium discoideum (Social amoeba).